The primary structure comprises 150 residues: D-aminoacyl-tRNA deacylase (150 aa).

The Gly-cisPro motif, important for rejection of L-amino acids motif lies at 137–138 (GP).

It belongs to the DTD family. As to quaternary structure, homodimer.

Its subcellular location is the cytoplasm. The enzyme catalyses glycyl-tRNA(Ala) + H2O = tRNA(Ala) + glycine + H(+). It carries out the reaction a D-aminoacyl-tRNA + H2O = a tRNA + a D-alpha-amino acid + H(+). Functionally, an aminoacyl-tRNA editing enzyme that deacylates mischarged D-aminoacyl-tRNAs. Also deacylates mischarged glycyl-tRNA(Ala), protecting cells against glycine mischarging by AlaRS. Acts via tRNA-based rather than protein-based catalysis; rejects L-amino acids rather than detecting D-amino acids in the active site. By recycling D-aminoacyl-tRNA to D-amino acids and free tRNA molecules, this enzyme counteracts the toxicity associated with the formation of D-aminoacyl-tRNA entities in vivo and helps enforce protein L-homochirality. This chain is D-aminoacyl-tRNA deacylase, found in Listeria innocua serovar 6a (strain ATCC BAA-680 / CLIP 11262).